The following is a 157-amino-acid chain: Endoribonuclease YbeY (157 aa).

Residues His-118, His-122, and His-128 each coordinate Zn(2+).

The protein belongs to the endoribonuclease YbeY family. The cofactor is Zn(2+).

Its subcellular location is the cytoplasm. Its function is as follows. Single strand-specific metallo-endoribonuclease involved in late-stage 70S ribosome quality control and in maturation of the 3' terminus of the 16S rRNA. The polypeptide is Endoribonuclease YbeY (Shewanella loihica (strain ATCC BAA-1088 / PV-4)).